A 572-amino-acid chain; its full sequence is Proline--tRNA ligase (572 aa).

This sequence belongs to the class-II aminoacyl-tRNA synthetase family. ProS type 1 subfamily. In terms of assembly, homodimer.

It localises to the cytoplasm. The catalysed reaction is tRNA(Pro) + L-proline + ATP = L-prolyl-tRNA(Pro) + AMP + diphosphate. In terms of biological role, catalyzes the attachment of proline to tRNA(Pro) in a two-step reaction: proline is first activated by ATP to form Pro-AMP and then transferred to the acceptor end of tRNA(Pro). As ProRS can inadvertently accommodate and process non-cognate amino acids such as alanine and cysteine, to avoid such errors it has two additional distinct editing activities against alanine. One activity is designated as 'pretransfer' editing and involves the tRNA(Pro)-independent hydrolysis of activated Ala-AMP. The other activity is designated 'posttransfer' editing and involves deacylation of mischarged Ala-tRNA(Pro). The misacylated Cys-tRNA(Pro) is not edited by ProRS. This chain is Proline--tRNA ligase, found in Escherichia coli O9:H4 (strain HS).